The chain runs to 133 residues: uncharacterized protein (133 aa).

This is an uncharacterized protein from Rickettsia conorii (strain ATCC VR-613 / Malish 7).